The primary structure comprises 459 residues: Argininosuccinate lyase (459 aa).

Belongs to the lyase 1 family. Argininosuccinate lyase subfamily.

It localises to the cytoplasm. The catalysed reaction is 2-(N(omega)-L-arginino)succinate = fumarate + L-arginine. Its pathway is amino-acid biosynthesis; L-arginine biosynthesis; L-arginine from L-ornithine and carbamoyl phosphate: step 3/3. The sequence is that of Argininosuccinate lyase from Prochlorococcus marinus (strain MIT 9301).